The sequence spans 320 residues: Aspartate carbamoyltransferase catalytic subunit (320 aa).

Positions 58 and 59 each coordinate carbamoyl phosphate. K86 is a binding site for L-aspartate. Residues R108, H136, and Q139 each coordinate carbamoyl phosphate. The L-aspartate site is built by R169 and R223. G264 and P265 together coordinate carbamoyl phosphate.

This sequence belongs to the aspartate/ornithine carbamoyltransferase superfamily. ATCase family. In terms of assembly, heterododecamer (2C3:3R2) of six catalytic PyrB chains organized as two trimers (C3), and six regulatory PyrI chains organized as three dimers (R2).

The catalysed reaction is carbamoyl phosphate + L-aspartate = N-carbamoyl-L-aspartate + phosphate + H(+). The protein operates within pyrimidine metabolism; UMP biosynthesis via de novo pathway; (S)-dihydroorotate from bicarbonate: step 2/3. Its function is as follows. Catalyzes the condensation of carbamoyl phosphate and aspartate to form carbamoyl aspartate and inorganic phosphate, the committed step in the de novo pyrimidine nucleotide biosynthesis pathway. The chain is Aspartate carbamoyltransferase catalytic subunit from Cereibacter sphaeroides (strain ATCC 17025 / ATH 2.4.3) (Rhodobacter sphaeroides).